The following is a 176-amino-acid chain: Ribosome rescue factor SmrB (176 aa).

One can recognise a Smr domain in the interval 93 to 168; it reads LDLHGYRQSE…GDAALLVLID (76 aa).

This sequence belongs to the SmrB family. In terms of assembly, associates with collided ribosomes, but not with correctly translating polysomes.

Acts as a ribosome collision sensor. Detects stalled/collided disomes (pairs of ribosomes where the leading ribosome is stalled and a second ribosome has collided with it) and endonucleolytically cleaves mRNA at the 5' boundary of the stalled ribosome. Stalled/collided disomes form a new interface (primarily via the 30S subunits) that binds SmrB. Cleaved mRNA becomes available for tmRNA ligation, leading to ribosomal subunit dissociation and rescue of stalled ribosomes. In Shewanella sp. (strain W3-18-1), this protein is Ribosome rescue factor SmrB.